Here is an 806-residue protein sequence, read N- to C-terminus: MEPFSAAQNKEDKDTSVEPPRRRCHRKNKGTNVEPPSSPYHPKVLARWDPANEKRPDIGEAPVFHPTSEEFEDTLAYIEKIRPLAESFGICRIVPPSNWSPPCRLKGDSIWKNKNFPTRVQFVDLLQNRGPVKKKTPKGRKRKRGKYSRTVAPKKRNGSVSKSVSTPKATEEENFGFESGPEFTLEKFEKYAQDFKDSYFERKDNVGDPSVEEIEGEYWRIIEKETNEVKVLYGTDLENPILGSGFSKGVKIPTRRNDMDKYISSGWNLNNLARLQGSLLSFEDCEISGVQVPWLYVGMCFSTFCWHVEDNHLYSLNYHHFGEPKVWYGVPGSHATGLEKAMRKHLPDLFDEQPDLLHELVTQFSPTILKNEGVPVYRAVQNAGEYVLTFPRAYHSGFNCGFNCAEAVNVAPVDWLAHGQNAVEIYSQETRKTSLSHDKILLGAAFEAVKSLSAHGEDNTKRFSWKRFCGKDGIITKAIEARLRMEEKRIEALGNGFSLVKMDKDFDSNCERECISCFSDLHLSATGCKNCSSLEEYGCTKHDICSCEGKDRFIFLRYTIDELSSLVRALEGESDDLKAWLSKVMEGCSETQKGESSGIIVKEKQVQEECFDLNGECNKSSEICEDASIMDLAAYHVEPINLGFLVVGKLWCNKHAIFPKGFKSRVKFYNVQDPMRISYYVSEIVDAGLLGPLFKVTLEESQDESFSYASPQKCWEMVLLRVKEEIMRRSNQKQDVHMLESIDGLKMFGFRSPFIVQATEALDPNHGQVEYWNHKNEKDSLEMKDCFMSNSSQSLSKARLFGVDLN.

Positions 1 to 43 (MEPFSAAQNKEDKDTSVEPPRRRCHRKNKGTNVEPPSSPYHPK) are disordered. Residues 9–21 (NKEDKDTSVEPPR) are compositionally biased toward basic and acidic residues. One can recognise a JmjN domain in the interval 61 to 102 (APVFHPTSEEFEDTLAYIEKIRPLAESFGICRIVPPSNWSPP). Positions 128–176 (NRGPVKKKTPKGRKRKRGKYSRTVAPKKRNGSVSKSVSTPKATEEENFG) are disordered. The span at 131–157 (PVKKKTPKGRKRKRGKYSRTVAPKKRN) shows a compositional bias: basic residues. Positions 132 to 139 (VKKKTPKG) match the Nuclear localization signal motif. Positions 158–168 (GSVSKSVSTPK) are enriched in polar residues. Residues 261–427 (KYISSGWNLN…HGQNAVEIYS (167 aa)) form the JmjC domain. Fe cation-binding residues include histidine 307, glutamate 309, and histidine 395. 8 residues coordinate Zn(2+): cysteine 514, cysteine 517, cysteine 528, cysteine 531, cysteine 539, histidine 542, cysteine 545, and cysteine 547. The segment at 514–566 (CISCFSDLHLSATGCKNCSSLEEYGCTKHDICSCEGKDRFIFLRYTIDELSSL) adopts a C5HC2 zinc-finger fold. Residues 629 to 687 (IMDLAAYHVEPINLGFLVVGKLWCNKHAIFPKGFKSRVKFYNVQDPMRISYYVSEIVDA) form the FYR N-terminal domain. One can recognise an FYR C-terminal domain in the interval 689–775 (LLGPLFKVTL…HGQVEYWNHK (87 aa)).

It belongs to the JARID1 histone demethylase family. It depends on Fe(2+) as a cofactor. Expressed in roots, cotyledons, shoot apex, rosette and cauline leaves, stems, inflorescences and siliques. Expressed at low levels during vegetative growth but to higher levels in young floral organs.

It localises to the nucleus. It carries out the reaction N(6),N(6),N(6)-trimethyl-L-lysyl(4)-[histone H3] + 2-oxoglutarate + O2 = N(6),N(6)-dimethyl-L-lysyl(4)-[histone H3] + formaldehyde + succinate + CO2. Histone demethylase that demethylates 'Lys-4' (H3K4me) of histone H3 with a specific activity for H3K4me3. No activity on H3K4me2, H3K4me1, H3K9me3/2, H3K27me3/2 and H3K36me3/2. Involved in the control of flowering time by demethylating H3K4me3 at the FLC locus and repressing its expression. The repression of FLC level and reduction in H3K4me3 at the FLC locus results in induction of the flowering activator FT, which is a downstream target of FLC. Promotes salt tolerance by down-regulating the expression of several transcriptions factors involved in stress responses via H3K4me3 and H3K4me2 demethylation. The sequence is that of Lysine-specific demethylase JMJ15 from Arabidopsis thaliana (Mouse-ear cress).